The sequence spans 183 residues: GMP synthase [glutamine-hydrolyzing] subunit A (183 aa).

Residues 3–183 form the Glutamine amidotransferase type-1 domain; the sequence is HILVVDNHGQ…VFENFVAICE (181 aa). The Nucleophile role is filled by Cys-74. Catalysis depends on residues His-162 and Glu-164.

In terms of assembly, heterodimer composed of a glutamine amidotransferase subunit (A) and a GMP-binding subunit (B).

The catalysed reaction is XMP + L-glutamine + ATP + H2O = GMP + L-glutamate + AMP + diphosphate + 2 H(+). The protein operates within purine metabolism; GMP biosynthesis; GMP from XMP (L-Gln route): step 1/1. Its function is as follows. Catalyzes the synthesis of GMP from XMP. This is GMP synthase [glutamine-hydrolyzing] subunit A from Halobacterium salinarum (strain ATCC 700922 / JCM 11081 / NRC-1) (Halobacterium halobium).